The chain runs to 159 residues: S-ribosylhomocysteine lyase (159 aa).

Fe cation-binding residues include His-53, His-57, and Cys-124.

The protein belongs to the LuxS family. Homodimer. The cofactor is Fe cation.

It catalyses the reaction S-(5-deoxy-D-ribos-5-yl)-L-homocysteine = (S)-4,5-dihydroxypentane-2,3-dione + L-homocysteine. Functionally, involved in the synthesis of autoinducer 2 (AI-2) which is secreted by bacteria and is used to communicate both the cell density and the metabolic potential of the environment. The regulation of gene expression in response to changes in cell density is called quorum sensing. Catalyzes the transformation of S-ribosylhomocysteine (RHC) to homocysteine (HC) and 4,5-dihydroxy-2,3-pentadione (DPD). This is S-ribosylhomocysteine lyase from Porphyromonas gingivalis (strain ATCC 33277 / DSM 20709 / CIP 103683 / JCM 12257 / NCTC 11834 / 2561).